The following is a 214-amino-acid chain: MRVRYKPWAEDYLKEHPNLVDMDGAHAGKMSEWFDKEQPIYIEIGSGMGQFITTLASKFPEINFVSMEREKSVMYKVLDKVKELNLTNLKMICNDAIELNEYFNDGEISRIYLNFSDPWPKKRHAKRRLTYHTFLALYQQILKEDGEIHFKTDNRGLFAFSLESMSQYGMYFTKLNLNLHDEDDEDNILTEYEKKFSEKGSRIYRMEAKFHKSI.

S-adenosyl-L-methionine-binding residues include glutamate 43, glutamate 68, aspartate 95, and aspartate 117. The active site involves aspartate 117. Substrate is bound by residues lysine 121, aspartate 153, and 190–193 (TEYE).

Belongs to the class I-like SAM-binding methyltransferase superfamily. TrmB family.

It carries out the reaction guanosine(46) in tRNA + S-adenosyl-L-methionine = N(7)-methylguanosine(46) in tRNA + S-adenosyl-L-homocysteine. Its pathway is tRNA modification; N(7)-methylguanine-tRNA biosynthesis. In terms of biological role, catalyzes the formation of N(7)-methylguanine at position 46 (m7G46) in tRNA. This chain is tRNA (guanine-N(7)-)-methyltransferase, found in Staphylococcus haemolyticus (strain JCSC1435).